The sequence spans 512 residues: Glucose-1-phosphate adenylyltransferase small subunit 2, chloroplastic (512 aa).

Positions 1 to 21 (MAAIGVLKVPPSSSSSSSSSS) are disordered. The transit peptide at 1–63 (MAAIGVLKVP…RNPFIVSPKA (63 aa)) directs the protein to the chloroplast. Positions 12 to 21 (SSSSSSSSSS) are enriched in low complexity.

This sequence belongs to the bacterial/plant glucose-1-phosphate adenylyltransferase family. In terms of assembly, heterotetramer. In terms of tissue distribution, leaves and seeds.

The protein resides in the plastid. It is found in the chloroplast. The enzyme catalyses alpha-D-glucose 1-phosphate + ATP + H(+) = ADP-alpha-D-glucose + diphosphate. It functions in the pathway glycan biosynthesis; starch biosynthesis. Its activity is regulated as follows. Activated by 3'phosphoglycerate, inhibited by orthophosphate. Allosteric regulation. Its function is as follows. This protein plays a role in synthesis of starch. It catalyzes the synthesis of the activated glycosyl donor, ADP-glucose from Glc-1-P and ATP. The sequence is that of Glucose-1-phosphate adenylyltransferase small subunit 2, chloroplastic (AGPP) from Vicia faba (Broad bean).